The following is a 59-amino-acid chain: Large ribosomal subunit protein uL30 (59 aa).

The protein belongs to the universal ribosomal protein uL30 family. In terms of assembly, part of the 50S ribosomal subunit.

This Clostridium botulinum (strain 657 / Type Ba4) protein is Large ribosomal subunit protein uL30.